Here is a 427-residue protein sequence, read N- to C-terminus: 2-oxoglutarate and iron-dependent oxygenase JMJD4 (427 aa).

A JmjC domain is found at 147–306 (SLVNDLEDIF…NMWHFLQQEL (160 aa)). The Fe cation site is built by H194, D196, and H274.

This sequence belongs to the JMJD6 family. Interacts with ETF1. Interacts with the ETF1-GSPT1 complex. The cofactor is Fe(2+).

The protein localises to the cytoplasm. It catalyses the reaction L-lysyl-[protein] + 2-oxoglutarate + O2 = 4-hydroxy-L-lysyl-[protein] + succinate + CO2. Functionally, catalyzes the 2-oxoglutarate and iron-dependent C4-lysyl hydroxylation of ETF1 at 'Lys-63' thereby promoting the translational termination efficiency of ETF1. Not essential for embryonic stem cell (ESC) maintenance and the embryonic and postnatal development. This Mus musculus (Mouse) protein is 2-oxoglutarate and iron-dependent oxygenase JMJD4 (Jmjd4).